A 413-amino-acid chain; its full sequence is MLKKFIEDIEHHFEPGGKHEKWFALYEAAATLFYTPGLVTKRSSHVRDSVDLKRIMIMVWFAVFPAMFWGMYNAGGQAIAALNHMYAGDQLATVIAGNWHYWLTEMLGGTIGAEAGVGSMMLLGATYFLPIYATVFIVGGFWEVLFCMVRKHEVNEGFFVTSILFALIVPPTLPLWQAALGITFGVVVAKEIFGGTGRNFLNPALAGRAFLFFAYPAQISGDVVWTAADGFSGATALSQWAHGGSGALINNITGAPITWMDAFIGNIPGSIGEVSTLALMIGAAMIVYMRIASWRIIAGVMIGMIAVSTLFNVIGSDTNPMFNMPWHWHLVLGGFAFGMFFMATDPVSASFTNSGKWWYGILIGAMCVMIRVVNPAYPEGMMLAILFANLFAPLFDHVVIEKNIKRRLARYGK.

Transmembrane regions (helical) follow at residues 55–75 (IMIMVWFAVFPAMFWGMYNAG), 128–148 (FLPIYATVFIVGGFWEVLFCM), and 163–183 (ILFALIVPPTLPLWQAALGIT). At threonine 235 the chain carries FMN phosphoryl threonine. The next 5 membrane-spanning stretches (helical) occupy residues 267–287 (IPGSIGEVSTLALMIGAAMIV), 296–316 (IIAGVMIGMIAVSTLFNVIGS), 324–344 (MPWHWHLVLGGFAFGMFFMAT), 357–377 (WWYGILIGAMCVMIRVVNPAY), and 380–400 (GMMLAILFANLFAPLFDHVVI).

The protein belongs to the NqrB/RnfD family. In terms of assembly, composed of six subunits; NqrA, NqrB, NqrC, NqrD, NqrE and NqrF. FMN serves as cofactor.

It is found in the cell inner membrane. The enzyme catalyses a ubiquinone + n Na(+)(in) + NADH + H(+) = a ubiquinol + n Na(+)(out) + NAD(+). Functionally, NQR complex catalyzes the reduction of ubiquinone-1 to ubiquinol by two successive reactions, coupled with the transport of Na(+) ions from the cytoplasm to the periplasm. NqrA to NqrE are probably involved in the second step, the conversion of ubisemiquinone to ubiquinol. In Vibrio campbellii (strain ATCC BAA-1116), this protein is Na(+)-translocating NADH-quinone reductase subunit B.